A 370-amino-acid chain; its full sequence is Nodulation protein Z (370 aa).

Residues 47-361 (SSNDRFVVSR…NDPGRLILIE (315 aa)) enclose the GT23 domain.

The protein belongs to the glycosyltransferase 23 family.

Functionally, fucosyltransferase which adds the fucose moiety of the nod factor on its terminal reducing N-acetylglucosamine end. Uses GDP-fucose as the donor group. The protein is Nodulation protein Z (nodZ) of Bradyrhizobium diazoefficiens (strain JCM 10833 / BCRC 13528 / IAM 13628 / NBRC 14792 / USDA 110).